Reading from the N-terminus, the 706-residue chain is Elongation factor G (706 aa).

Residues 8-295 (ERYRNFGIMA…AVIDYLPSPL (288 aa)) enclose the tr-type G domain. GTP is bound by residues 17–24 (AHIDAGKT), 92–96 (DTPGH), and 146–149 (NKMD).

It belongs to the TRAFAC class translation factor GTPase superfamily. Classic translation factor GTPase family. EF-G/EF-2 subfamily.

It localises to the cytoplasm. Catalyzes the GTP-dependent ribosomal translocation step during translation elongation. During this step, the ribosome changes from the pre-translocational (PRE) to the post-translocational (POST) state as the newly formed A-site-bound peptidyl-tRNA and P-site-bound deacylated tRNA move to the P and E sites, respectively. Catalyzes the coordinated movement of the two tRNA molecules, the mRNA and conformational changes in the ribosome. The protein is Elongation factor G of Jannaschia sp. (strain CCS1).